The sequence spans 64 residues: Alpha-conotoxin GI (64 aa).

Positions 1–21 (MGMRMMFTVFLLVVLATTVVS) are cleaved as a signal peptide. Positions 22–49 (FPSERASDGRDDTAKDEGSDMDKLVEKK) are excised as a propeptide. Cystine bridges form between Cys-51-Cys-56 and Cys-52-Cys-62. Residue Cys-62 is modified to Cysteine amide.

This sequence belongs to the conotoxin A superfamily. In terms of processing, not hydroxylated; hydroxylation, on a synthetic hydroxylated GI, improves its folding but impairs its activity against target receptors. As to expression, expressed by the venom duct.

The protein resides in the secreted. Functionally, alpha-conotoxins act on postsynaptic membranes, they bind to the nicotinic acetylcholine receptors (nAChR) and thus inhibit them. Reversibly inhibits mammalian muscle nAChR (IC(50)=339 nM on adult subtype (alpha-1-beta-1-gamma-delta/CHRNA1-CHRNB1-CHRNG-CHRND) and IC(50)=5.86-995 nM on fetal subtype (alpha-1-beta-1-delta-epsilon/CHRNA1-CHRNB1-CHRND-CHRNE)). The higher affinity site is the alpha/delta site on mouse muscle-derived BC3H-1 receptor, and the other site (alpha/gamma site) on nicotinic receptors from Torpedo californica electric organ. In Conus geographus (Geography cone), this protein is Alpha-conotoxin GI.